A 275-amino-acid chain; its full sequence is 3-methyl-2-oxobutanoate hydroxymethyltransferase (275 aa).

D49 and D88 together coordinate Mg(2+). Residues 49–50 (DS), D88, and K118 contribute to the 3-methyl-2-oxobutanoate site. E120 is a binding site for Mg(2+). The active-site Proton acceptor is E187.

It belongs to the PanB family. In terms of assembly, homodecamer; pentamer of dimers. The cofactor is Mg(2+).

The protein resides in the cytoplasm. It catalyses the reaction 3-methyl-2-oxobutanoate + (6R)-5,10-methylene-5,6,7,8-tetrahydrofolate + H2O = 2-dehydropantoate + (6S)-5,6,7,8-tetrahydrofolate. The protein operates within cofactor biosynthesis; (R)-pantothenate biosynthesis; (R)-pantoate from 3-methyl-2-oxobutanoate: step 1/2. Catalyzes the reversible reaction in which hydroxymethyl group from 5,10-methylenetetrahydrofolate is transferred onto alpha-ketoisovalerate to form ketopantoate. The protein is 3-methyl-2-oxobutanoate hydroxymethyltransferase of Rhodospirillum centenum (strain ATCC 51521 / SW).